The sequence spans 413 residues: Probable isoleucine--tRNA ligase, mitochondrial (413 aa).

A 'KMSKS' region motif is present at residues Lys298–Ser302. Lys301 contributes to the ATP binding site.

It belongs to the class-I aminoacyl-tRNA synthetase family.

The protein resides in the mitochondrion matrix. It carries out the reaction tRNA(Ile) + L-isoleucine + ATP = L-isoleucyl-tRNA(Ile) + AMP + diphosphate. The sequence is that of Probable isoleucine--tRNA ligase, mitochondrial from Ciona intestinalis (Transparent sea squirt).